The sequence spans 343 residues: Tryptophan--tRNA ligase (343 aa).

Residues 15–17 (QPT) and 24–25 (GN) contribute to the ATP site. Residues 16–25 (PTSDSLHLGN) carry the 'HIGH' region motif. Residue Asp145 coordinates L-tryptophan. ATP contacts are provided by residues 157–159 (GED), Ile196, and 205–209 (KMSKS). Residues 205 to 209 (KMSKS) carry the 'KMSKS' region motif.

This sequence belongs to the class-I aminoacyl-tRNA synthetase family. As to quaternary structure, homodimer.

Its subcellular location is the cytoplasm. It carries out the reaction tRNA(Trp) + L-tryptophan + ATP = L-tryptophyl-tRNA(Trp) + AMP + diphosphate + H(+). Functionally, catalyzes the attachment of tryptophan to tRNA(Trp). This Mycobacterium leprae (strain TN) protein is Tryptophan--tRNA ligase.